Reading from the N-terminus, the 83-residue chain is Small ribosomal subunit protein eS21 (83 aa).

Belongs to the eukaryotic ribosomal protein eS21 family. Component of the 40S small ribosomal subunit. Interacts with sta.

The protein localises to the cytoplasm. It localises to the cytosol. It is found in the rough endoplasmic reticulum. Its function is as follows. May be an associated component of the ribosome rather than a core structural subunit. May act as a translation initiation factor. Has a role in regulation of cell proliferation in the hematopoietic organs and the imaginal disks of larva. In Drosophila grimshawi (Hawaiian fruit fly), this protein is Small ribosomal subunit protein eS21 (RpS21).